Here is a 263-residue protein sequence, read N- to C-terminus: tRNA uridine(34) hydroxylase (263 aa).

The 95-residue stretch at 129-223 (EGREIALLDT…YFEEVGGAHY (95 aa)) folds into the Rhodanese domain. Cysteine 183 serves as the catalytic Cysteine persulfide intermediate.

This sequence belongs to the TrhO family.

It catalyses the reaction uridine(34) in tRNA + AH2 + O2 = 5-hydroxyuridine(34) in tRNA + A + H2O. Functionally, catalyzes oxygen-dependent 5-hydroxyuridine (ho5U) modification at position 34 in tRNAs. This Variovorax paradoxus (strain S110) protein is tRNA uridine(34) hydroxylase.